A 465-amino-acid chain; its full sequence is Gamma-aminobutyric acid receptor subunit rho-2 (465 aa).

Residues 1 to 20 (MPYFTRLILFLFCLMVLVES) form the signal peptide. The Extracellular portion of the chain corresponds to 21-260 (RKPKRKRWTG…LYINFTLRRH (240 aa)). Arginine 105 contacts 4-aminobutanoate. Asparagine 120 is a glycosylation site (N-linked (GlcNAc...) asparagine). A 4-aminobutanoate-binding site is contributed by serine 169. Cysteines 178 and 192 form a disulfide. A 4-aminobutanoate-binding site is contributed by glutamate 197. Asparagine 254 carries an N-linked (GlcNAc...) asparagine glycan. A helical membrane pass occupies residues 261–281 (IFFFLLQTYFPATLMVMLSWV). The Cytoplasmic portion of the chain corresponds to 282 to 293 (SFWIDRRAVPAR). A helical transmembrane segment spans residues 294–314 (VSLGITTVLTMTTIITGVNAS). The Extracellular segment spans residues 315-325 (MPRVSYVKAVD). The helical transmembrane segment at 326–346 (IYLWVSFVFVFLSVLEYAAVN) threads the bilayer. Over 347–443 (YLTTVQERKE…IFQNTHAIDK (97 aa)) the chain is Cytoplasmic. The chain crosses the membrane as a helical span at residues 444 to 464 (YSRLIFPASYIFFNLIYWSVF). A topological domain (extracellular) is located at residue serine 465.

The protein belongs to the ligand-gated ion channel (TC 1.A.9) family. Gamma-aminobutyric acid receptor (TC 1.A.9.5) subfamily. GABRR2 sub-subfamily. Three rho subunits (rho-1/GBRR1, rho-2/GBRR2 and rho-3/GBRR3) coassemble either to form functional homopentamers or heteropentamers. Rho-2 is unable to form a functional homopentamer. Interacts with SQSTM1.

The protein localises to the postsynaptic cell membrane. It is found in the cell membrane. The enzyme catalyses chloride(in) = chloride(out). In terms of biological role, rho subunit of the pentameric ligand-gated chloride channels responsible for mediating the effects of gamma-aminobutyric acid (GABA), the major inhibitory neurotransmitter in the brain. Rho-containing GABA-gated chloride channels are a subclass of GABA(A) receptors (GABAARs) entirely composed of rho subunits, where GABA molecules bind at the rho intersubunit interfaces. When activated by GABA, rho-GABAARs selectively allow the flow of chloride anions across the cell membrane down their electrochemical gradient. Rho-2 GABAARs may contribute to the regulation of glial development in the cerebellum by controlling extrasynaptic transmission. Rho-2 GABAARs are also involved in neuronal tonic (extrasynaptic) and phasic (synaptic) transmission in the Purkinje neurons of the cerebellum. Rho-2 GABAARs expressed in retina may play a role in retinal neurotransmission. This Homo sapiens (Human) protein is Gamma-aminobutyric acid receptor subunit rho-2.